The chain runs to 173 residues: Photosystem I assembly protein Ycf3 (173 aa).

3 TPR repeats span residues 35–68 (AYIY…EENK), 72–105 (GETL…NPKQ), and 120–153 (GRFA…YPGG).

Belongs to the Ycf3 family.

It localises to the cellular thylakoid membrane. Its function is as follows. Essential for the assembly of the photosystem I (PSI) complex. May act as a chaperone-like factor to guide the assembly of the PSI subunits. The polypeptide is Photosystem I assembly protein Ycf3 (Prochlorococcus marinus subsp. pastoris (strain CCMP1986 / NIES-2087 / MED4)).